Here is a 364-residue protein sequence, read N- to C-terminus: Histidinol-phosphate aminotransferase (364 aa).

K226 is modified (N6-(pyridoxal phosphate)lysine).

The protein belongs to the class-II pyridoxal-phosphate-dependent aminotransferase family. Histidinol-phosphate aminotransferase subfamily. As to quaternary structure, homodimer. The cofactor is pyridoxal 5'-phosphate.

The catalysed reaction is L-histidinol phosphate + 2-oxoglutarate = 3-(imidazol-4-yl)-2-oxopropyl phosphate + L-glutamate. The protein operates within amino-acid biosynthesis; L-histidine biosynthesis; L-histidine from 5-phospho-alpha-D-ribose 1-diphosphate: step 7/9. In Campylobacter jejuni subsp. jejuni serotype O:6 (strain 81116 / NCTC 11828), this protein is Histidinol-phosphate aminotransferase.